Here is a 397-residue protein sequence, read N- to C-terminus: Thioredoxin-interacting protein (397 aa).

Lys-213 participates in a covalent cross-link: Glycyl lysine isopeptide (Lys-Gly) (interchain with G-Cter in ubiquitin). Ser-362 carries the phosphoserine modification.

The protein belongs to the arrestin family. In terms of assembly, homodimer; disulfide-linked. Interacts with TXN/thioredoxin through its redox-active site. Interacts with transcriptional repressors ZBTB16, ZBTB32 and HDAC1. Interacts with DDIT4. Post-translationally, ubiquitinated; undergoes heterotypic 'Lys-48'-/'Lys-63'-branched polyubiquitination catalyzed by ITCH and UBR5 resulting in proteasomal degradation. Deubiquitinated by USP5, leading to TXNIP stabilization. In terms of tissue distribution, ubiquitously expressed.

The protein resides in the cytoplasm. Functionally, may act as an oxidative stress mediator by inhibiting thioredoxin activity or by limiting its bioavailability. Interacts with COPS5 and restores COPS5-induced suppression of CDKN1B stability, blocking the COPS5-mediated translocation of CDKN1B from the nucleus to the cytoplasm. Functions as a transcriptional repressor, possibly by acting as a bridge molecule between transcription factors and corepressor complexes, and over-expression will induce G0/G1 cell cycle arrest. Required for the maturation of natural killer cells. Acts as a suppressor of tumor cell growth. Inhibits the proteasomal degradation of DDIT4, and thereby contributes to the inhibition of the mammalian target of rapamycin complex 1 (mTORC1). In Mus musculus (Mouse), this protein is Thioredoxin-interacting protein (Txnip).